Reading from the N-terminus, the 83-residue chain is Large ribosomal subunit protein bL27c (83 aa).

Residues Met-1 to Lys-24 form a disordered region.

Belongs to the bacterial ribosomal protein bL27 family.

Its subcellular location is the plastid. It localises to the chloroplast. The chain is Large ribosomal subunit protein bL27c (rpl27) from Trieres chinensis (Marine centric diatom).